We begin with the raw amino-acid sequence, 267 residues long: Hydrolase FUB4 (267 aa).

Catalysis depends on charge relay system residues serine 93, aspartate 183, and histidine 243.

Belongs to the AB hydrolase 3 family.

The protein operates within mycotoxin biosynthesis. Functionally, hydrolase; part of the gene cluster that mediates the biosynthesis of fusaric acid, a mycotoxin with low to moderate toxicity to animals and humans, but with high phytotoxic properties. L-aspartate is suggested as fusaric acid amino acid precursor that is activated and further processed to O-acetyl-L-homoserine by cluster enzymes aspartate kinase FUB3 and homoserine O-acetyltransferase FUB5, as well as enzymes of the primary metabolism. The polyketide synthase (PKS) FUB1 generates the triketide trans-2-hexenal which is presumptively released by the hydrolase FUB4 and linked to the NRPS-bound amino acid precursor by NAD(P)-dependent dehydrogenase FUB6. FUB1, FUB4, and the non-canonical NRPS Fub8 may form an enzyme complex. Further processing of the NRPS-bound intermediate might be carried out by FUB6 and the sulfhydrylase FUB7, enabling a spontaneous electrocyclization to close the carbon backbone of fusaric acid. Dihydrofusaric acid is likely to be released via reduction by the thioester reductase (TR) domain of FUB8 whereupon the final oxidation to fusaric acid may (also) be performed by the FMN-dependent dehydrogenase FUB9. This is Hydrolase FUB4 from Fusarium oxysporum f. sp. lycopersici (strain 4287 / CBS 123668 / FGSC 9935 / NRRL 34936) (Fusarium vascular wilt of tomato).